The sequence spans 367 residues: Alanine racemase (367 aa).

Catalysis depends on Lys40, which acts as the Proton acceptor; specific for D-alanine. Lys40 is modified (N6-(pyridoxal phosphate)lysine). Substrate is bound at residue Arg136. Residue Tyr263 is the Proton acceptor; specific for L-alanine of the active site. Met310 serves as a coordination point for substrate.

Belongs to the alanine racemase family. Pyridoxal 5'-phosphate is required as a cofactor.

The enzyme catalyses L-alanine = D-alanine. It functions in the pathway amino-acid biosynthesis; D-alanine biosynthesis; D-alanine from L-alanine: step 1/1. In terms of biological role, catalyzes the interconversion of L-alanine and D-alanine. May also act on other amino acids. The protein is Alanine racemase (alr) of Streptococcus thermophilus (strain ATCC BAA-250 / LMG 18311).